A 318-amino-acid polypeptide reads, in one-letter code: MSSEPVPQAVIDELERVLVNLDKSNPLSFRYRALFSLNALAKKGDKRAVDAIYKAFIDDSELLKHEMAYVMGQSGQQYAVQPLINIVNDLDQQVMVRHEAAEALGALGFTESLPVLEKYYKEDPLAPIRETCELAIARIQWKNGLDKNNEKITPSMYDSVVDPAPPMPDHEQDVKSEVAKLRSEIVDQNLPLFYRYRVMFRLRNIGNEEAVLALTDGFKDPSPLFRHEIAFVFGQMIAPASVPALIKVLENTEEVPMVRHEAAEALGGIANDECLPVLKKFSKDDVRVVAESCIVALDMIEYEKSGDMEYAYIPKVSA.

Residues histidine 65, glutamate 66, histidine 98, and glutamate 99 each contribute to the Fe cation site. HEAT-like PBS-type repeat units follow at residues 96 to 122 (VRHE…YYKE), 194 to 220 (YRYR…GFKD), 225 to 251 (FRHE…VLEN), and 258 to 284 (VRHE…FSKD). Fe cation contacts are provided by histidine 227, glutamate 228, histidine 260, and glutamate 261.

Belongs to the deoxyhypusine hydroxylase family. It depends on Fe(2+) as a cofactor.

It localises to the cytoplasm. Its subcellular location is the nucleus. The catalysed reaction is [eIF5A protein]-deoxyhypusine + AH2 + O2 = [eIF5A protein]-hypusine + A + H2O. The protein operates within protein modification; eIF5A hypusination. Functionally, catalyzes the hydroxylation of the N(6)-(4-aminobutyl)-L-lysine intermediate to form hypusine, an essential post-translational modification only found in mature eIF-5A factor. The polypeptide is Deoxyhypusine hydroxylase (lia1) (Schizosaccharomyces pombe (strain 972 / ATCC 24843) (Fission yeast)).